The sequence spans 185 residues: Ribosome maturation factor RimM (185 aa).

Residues 106–185 enclose the PRC barrel domain; sequence TGDYYWKDLI…TIEVDWDPGF (80 aa).

The protein belongs to the RimM family. In terms of assembly, binds ribosomal protein uS19.

It localises to the cytoplasm. Functionally, an accessory protein needed during the final step in the assembly of 30S ribosomal subunit, possibly for assembly of the head region. Essential for efficient processing of 16S rRNA. May be needed both before and after RbfA during the maturation of 16S rRNA. It has affinity for free ribosomal 30S subunits but not for 70S ribosomes. This Photorhabdus laumondii subsp. laumondii (strain DSM 15139 / CIP 105565 / TT01) (Photorhabdus luminescens subsp. laumondii) protein is Ribosome maturation factor RimM.